The chain runs to 376 residues: 1-acyl-sn-glycerol-3-phosphate acyltransferase 3 (376 aa).

Helical transmembrane passes span 14 to 34 and 49 to 69; these read VLFLISGLIVNIIQLVFFIIV and VAELLWLQLIWLFDWWACIKI. The HXXXXD motif signature appears at 92 to 97; sequence HRSDID. A run of 3 helical transmembrane segments spans residues 98–118, 306–326, and 335–355; these read WLIGWVMAQRVGCLGSSLAIM, LIVVIIWLGFLVFGGFKLLQW, and IILLFVFFLVIATITMQILIQ.

This sequence belongs to the 1-acyl-sn-glycerol-3-phosphate acyltransferase family. Predominantly expressed in pollen.

The protein localises to the membrane. It carries out the reaction a 1-acyl-sn-glycero-3-phosphate + an acyl-CoA = a 1,2-diacyl-sn-glycero-3-phosphate + CoA. It participates in phospholipid metabolism; CDP-diacylglycerol biosynthesis; CDP-diacylglycerol from sn-glycerol 3-phosphate: step 2/3. Converts lysophosphatidic acid (LPA) into phosphatidic acid by incorporating acyl moiety at the 2 position. Has preference for C-18-CoA substrates compared to C-16-CoA substrates. This chain is 1-acyl-sn-glycerol-3-phosphate acyltransferase 3 (LPAT3), found in Arabidopsis thaliana (Mouse-ear cress).